Consider the following 329-residue polypeptide: Ketol-acid reductoisomerase (NADP(+)) (329 aa).

Positions 1–181 (MKVYYENDAD…GATRSGVLQT (181 aa)) constitute a KARI N-terminal Rossmann domain. Residues 24–27 (YGSQ), Arg-47, and 82–85 (DQVQ) contribute to the NADP(+) site. The active site involves His-107. Gly-133 lines the NADP(+) pocket. The 146-residue stretch at 182 to 327 (TFREETETDL…GELRKMMSWL (146 aa)) folds into the KARI C-terminal knotted domain. Positions 190, 194, 226, and 230 each coordinate Mg(2+). Ser-251 provides a ligand contact to substrate.

Belongs to the ketol-acid reductoisomerase family. It depends on Mg(2+) as a cofactor.

It carries out the reaction (2R)-2,3-dihydroxy-3-methylbutanoate + NADP(+) = (2S)-2-acetolactate + NADPH + H(+). The catalysed reaction is (2R,3R)-2,3-dihydroxy-3-methylpentanoate + NADP(+) = (S)-2-ethyl-2-hydroxy-3-oxobutanoate + NADPH + H(+). The protein operates within amino-acid biosynthesis; L-isoleucine biosynthesis; L-isoleucine from 2-oxobutanoate: step 2/4. It participates in amino-acid biosynthesis; L-valine biosynthesis; L-valine from pyruvate: step 2/4. In terms of biological role, involved in the biosynthesis of branched-chain amino acids (BCAA). Catalyzes an alkyl-migration followed by a ketol-acid reduction of (S)-2-acetolactate (S2AL) to yield (R)-2,3-dihydroxy-isovalerate. In the isomerase reaction, S2AL is rearranged via a Mg-dependent methyl migration to produce 3-hydroxy-3-methyl-2-ketobutyrate (HMKB). In the reductase reaction, this 2-ketoacid undergoes a metal-dependent reduction by NADPH to yield (R)-2,3-dihydroxy-isovalerate. In Maridesulfovibrio salexigens (strain ATCC 14822 / DSM 2638 / NCIMB 8403 / VKM B-1763) (Desulfovibrio salexigens), this protein is Ketol-acid reductoisomerase (NADP(+)).